The sequence spans 238 residues: MFLARNVSRVALRSASLSPAAIPQQQHAGVAAVYAVRFASSSGSGRPADNWAESQKEKAKAGLKDAQAEVGKVAREVKDKAAGGIEQAKDAVKQGANDLKRSGSRTFENAKDDIQAKAQHAKSDLKGAKHQAEGVVENVKEAAENAWEKTKDVAENLKDKVQSPGGLADKAANAWETVKDRAQDAASEVKHKAGDLKDKAQQVIHDATTQSGDNRKQDQQQRRDSQGSQSGQNSRSRN.

Positions 41–62 are disordered; it reads SSGSGRPADNWAESQKEKAKAG. Residues 50-202 are a coiled coil; that stretch reads NWAESQKEKA…AGDLKDKAQQ (153 aa). 6 LEA 11-mer repeat repeats span residues 64–74, 89–99, 140–150, 151–161, 179–189, and 190–200; these read KDAQAEVGKVA, KDAVKQGANDL, KEAAENAWEKT, KDVAENLKDKV, KDRAQDAASEV, and KHKAGDLKDKA. Basic and acidic residues-rich tracts occupy residues 182–200 and 213–225; these read AQDA…KDKA and DNRK…RRDS. The segment at 182 to 238 is disordered; sequence AQDAASEVKHKAGDLKDKAQQVIHDATTQSGDNRKQDQQQRRDSQGSQSGQNSRSRN. Residues 226–238 show a composition bias toward low complexity; sequence QGSQSGQNSRSRN.

This sequence belongs to the LEA type 4 family.

It is found in the mitochondrion. Its function is as follows. Mitochondrial heat soluble protein acting as a molecular shield in water-deficient condition. This chain is Group 3 late-embryogenesis abundant protein, mitochondrial, found in Hypsibius exemplaris (Freshwater tardigrade).